Here is a 100-residue protein sequence, read N- to C-terminus: Small ribosomal subunit protein bS18 (100 aa).

Residues 1-23 (MTFIRKPAGQAKPQKYSTDAYGR) form a disordered region.

This sequence belongs to the bacterial ribosomal protein bS18 family. Part of the 30S ribosomal subunit. Forms a tight heterodimer with protein bS6.

In terms of biological role, binds as a heterodimer with protein bS6 to the central domain of the 16S rRNA, where it helps stabilize the platform of the 30S subunit. This is Small ribosomal subunit protein bS18 from Endomicrobium trichonymphae.